A 252-amino-acid polypeptide reads, in one-letter code: Probable transcriptional regulatory protein Npun_R5651 (252 aa).

The protein belongs to the TACO1 family.

The protein resides in the cytoplasm. The protein is Probable transcriptional regulatory protein Npun_R5651 of Nostoc punctiforme (strain ATCC 29133 / PCC 73102).